The sequence spans 399 residues: Succinate--CoA ligase [ADP-forming] subunit beta (399 aa).

An ATP-grasp domain is found at 9-254 (KAVLAEFGAP…ESEEDPKEIE (246 aa)). Residues lysine 46, 53 to 55 (GRG), glutamate 109, alanine 112, and glutamate 117 contribute to the ATP site. Positions 209 and 223 each coordinate Mg(2+). Substrate-binding positions include asparagine 274 and 331–333 (GIM).

Belongs to the succinate/malate CoA ligase beta subunit family. As to quaternary structure, heterotetramer of two alpha and two beta subunits. Requires Mg(2+) as cofactor.

The catalysed reaction is succinate + ATP + CoA = succinyl-CoA + ADP + phosphate. The enzyme catalyses GTP + succinate + CoA = succinyl-CoA + GDP + phosphate. It participates in carbohydrate metabolism; tricarboxylic acid cycle; succinate from succinyl-CoA (ligase route): step 1/1. Succinyl-CoA synthetase functions in the citric acid cycle (TCA), coupling the hydrolysis of succinyl-CoA to the synthesis of either ATP or GTP and thus represents the only step of substrate-level phosphorylation in the TCA. The beta subunit provides nucleotide specificity of the enzyme and binds the substrate succinate, while the binding sites for coenzyme A and phosphate are found in the alpha subunit. This chain is Succinate--CoA ligase [ADP-forming] subunit beta, found in Caulobacter vibrioides (strain NA1000 / CB15N) (Caulobacter crescentus).